A 342-amino-acid chain; its full sequence is Methionyl-tRNA formyltransferase (342 aa).

S108–P111 provides a ligand contact to (6S)-5,6,7,8-tetrahydrofolate.

The protein belongs to the Fmt family.

The catalysed reaction is L-methionyl-tRNA(fMet) + (6R)-10-formyltetrahydrofolate = N-formyl-L-methionyl-tRNA(fMet) + (6S)-5,6,7,8-tetrahydrofolate + H(+). Its function is as follows. Attaches a formyl group to the free amino group of methionyl-tRNA(fMet). The formyl group appears to play a dual role in the initiator identity of N-formylmethionyl-tRNA by promoting its recognition by IF2 and preventing the misappropriation of this tRNA by the elongation apparatus. This Prochlorococcus marinus (strain MIT 9313) protein is Methionyl-tRNA formyltransferase.